The primary structure comprises 300 residues: Porphobilinogen deaminase (300 aa).

An S-(dipyrrolylmethanemethyl)cysteine modification is found at Cys-242.

This sequence belongs to the HMBS family. In terms of assembly, monomer. Requires dipyrromethane as cofactor.

It catalyses the reaction 4 porphobilinogen + H2O = hydroxymethylbilane + 4 NH4(+). It functions in the pathway porphyrin-containing compound metabolism; protoporphyrin-IX biosynthesis; coproporphyrinogen-III from 5-aminolevulinate: step 2/4. In terms of biological role, tetrapolymerization of the monopyrrole PBG into the hydroxymethylbilane pre-uroporphyrinogen in several discrete steps. The sequence is that of Porphobilinogen deaminase from Rickettsia bellii (strain OSU 85-389).